The sequence spans 202 residues: Nucleoside triphosphate pyrophosphatase (202 aa).

Aspartate 79 (proton acceptor) is an active-site residue.

Belongs to the Maf family. Requires a divalent metal cation as cofactor.

Its subcellular location is the cytoplasm. The catalysed reaction is a ribonucleoside 5'-triphosphate + H2O = a ribonucleoside 5'-phosphate + diphosphate + H(+). It catalyses the reaction a 2'-deoxyribonucleoside 5'-triphosphate + H2O = a 2'-deoxyribonucleoside 5'-phosphate + diphosphate + H(+). Functionally, nucleoside triphosphate pyrophosphatase. May have a dual role in cell division arrest and in preventing the incorporation of modified nucleotides into cellular nucleic acids. The chain is Nucleoside triphosphate pyrophosphatase from Rhodopseudomonas palustris (strain ATCC BAA-98 / CGA009).